Reading from the N-terminus, the 497-residue chain is Glycerol kinase (497 aa).

Thr11 provides a ligand contact to ADP. ATP-binding residues include Thr11, Thr12, and Ser13. Thr11 is a binding site for sn-glycerol 3-phosphate. Arg15 provides a ligand contact to ADP. Arg81, Glu82, Tyr134, and Asp244 together coordinate sn-glycerol 3-phosphate. Glycerol is bound by residues Arg81, Glu82, Tyr134, Asp244, and Gln245. ADP contacts are provided by Thr266 and Gly309. Positions 266, 309, 313, and 410 each coordinate ATP. Positions 410 and 414 each coordinate ADP.

Belongs to the FGGY kinase family.

It catalyses the reaction glycerol + ATP = sn-glycerol 3-phosphate + ADP + H(+). It functions in the pathway polyol metabolism; glycerol degradation via glycerol kinase pathway; sn-glycerol 3-phosphate from glycerol: step 1/1. Inhibited by fructose 1,6-bisphosphate (FBP). Its function is as follows. Key enzyme in the regulation of glycerol uptake and metabolism. Catalyzes the phosphorylation of glycerol to yield sn-glycerol 3-phosphate. This is Glycerol kinase from Fusobacterium nucleatum subsp. nucleatum (strain ATCC 25586 / DSM 15643 / BCRC 10681 / CIP 101130 / JCM 8532 / KCTC 2640 / LMG 13131 / VPI 4355).